A 233-amino-acid chain; its full sequence is Large ribosomal subunit protein uL1 (233 aa).

This sequence belongs to the universal ribosomal protein uL1 family. As to quaternary structure, part of the 50S ribosomal subunit.

Functionally, binds directly to 23S rRNA. The L1 stalk is quite mobile in the ribosome, and is involved in E site tRNA release. Protein L1 is also a translational repressor protein, it controls the translation of the L11 operon by binding to its mRNA. The protein is Large ribosomal subunit protein uL1 of Rhizobium etli (strain ATCC 51251 / DSM 11541 / JCM 21823 / NBRC 15573 / CFN 42).